The chain runs to 356 residues: 3-dehydroquinate synthase (356 aa).

Residues 101-105 (GVIGD), 125-126 (TT), Lys-138, and Lys-147 contribute to the NAD(+) site. Zn(2+) is bound by residues Glu-180, His-243, and His-260.

This sequence belongs to the sugar phosphate cyclases superfamily. Dehydroquinate synthase family. Co(2+) serves as cofactor. Zn(2+) is required as a cofactor. The cofactor is NAD(+).

Its subcellular location is the cytoplasm. The catalysed reaction is 7-phospho-2-dehydro-3-deoxy-D-arabino-heptonate = 3-dehydroquinate + phosphate. The protein operates within metabolic intermediate biosynthesis; chorismate biosynthesis; chorismate from D-erythrose 4-phosphate and phosphoenolpyruvate: step 2/7. Functionally, catalyzes the conversion of 3-deoxy-D-arabino-heptulosonate 7-phosphate (DAHP) to dehydroquinate (DHQ). The sequence is that of 3-dehydroquinate synthase from Alkaliphilus metalliredigens (strain QYMF).